Consider the following 144-residue polypeptide: Large ribosomal subunit protein uL16 (144 aa).

It belongs to the universal ribosomal protein uL16 family. Part of the 50S ribosomal subunit.

Functionally, binds 23S rRNA and is also seen to make contacts with the A and possibly P site tRNAs. This Thermoanaerobacter pseudethanolicus (strain ATCC 33223 / 39E) (Clostridium thermohydrosulfuricum) protein is Large ribosomal subunit protein uL16.